A 130-amino-acid chain; its full sequence is Small ribosomal subunit protein uS9 (130 aa).

The protein belongs to the universal ribosomal protein uS9 family.

The sequence is that of Small ribosomal subunit protein uS9 from Cupriavidus pinatubonensis (strain JMP 134 / LMG 1197) (Cupriavidus necator (strain JMP 134)).